The primary structure comprises 256 residues: Putative bidirectional sugar transporter SWEET7e (256 aa).

Over 1–9 (MVSPDLIRN) the chain is Extracellular. The chain crosses the membrane as a helical span at residues 10-30 (VVGIVGNAISFGLFLSPVLTF). The 88-residue stretch at 10-97 (VVGIVGNAIS…TIFFLFSNKK (88 aa)) folds into the MtN3/slv 1 domain. The Cytoplasmic segment spans residues 31–45 (WRIIKEKDMKYFKAD). The helical transmembrane segment at 46–66 (PYLATLLNCMLWVFYGLPIVH) threads the bilayer. The Extracellular portion of the chain corresponds to 67–69 (PNS). A helical membrane pass occupies residues 70–90 (ILVVTINGIGLVIEAVYLTIF). Residues 91-100 (FLFSNKKNKK) lie on the Cytoplasmic side of the membrane. The chain crosses the membrane as a helical span at residues 101–121 (MGVVLATEALFMAAVALGVLL). Topologically, residues 122-130 (GAHTHQRRS) are extracellular. The chain crosses the membrane as a helical span at residues 131–151 (LIVGILCVIFGTIMYSSPLTI). A MtN3/slv 2 domain is found at 133-212 (VGILCVIFGT…LMQLILDKNQ (80 aa)). Residues 152-164 (MSQVVKTKSVEYM) lie on the Cytoplasmic side of the membrane. A helical membrane pass occupies residues 165-185 (PLLLSVVSFLNGLCWTSYALI). Position 186 (Arg186) is a topological domain, extracellular. The helical transmembrane segment at 187–207 (FDIFITIPNGLGVLFTLMQLI) threads the bilayer. Topologically, residues 208 to 256 (LDKNQDKNLELPTVAPVAKETSIVTPVSKDDDINGSTASHVIINITKEP) are cytoplasmic.

The protein belongs to the SWEET sugar transporter family. In terms of assembly, forms homooligomers and/or heterooligomers.

It is found in the cell membrane. Its function is as follows. Mediates both low-affinity uptake and efflux of sugar across the plasma membrane. The protein is Putative bidirectional sugar transporter SWEET7e (SWEET7E) of Oryza sativa subsp. japonica (Rice).